Reading from the N-terminus, the 237-residue chain is tRNA1(Val) (adenine(37)-N6)-methyltransferase (237 aa).

Belongs to the methyltransferase superfamily. tRNA (adenine-N(6)-)-methyltransferase family.

It is found in the cytoplasm. The catalysed reaction is adenosine(37) in tRNA1(Val) + S-adenosyl-L-methionine = N(6)-methyladenosine(37) in tRNA1(Val) + S-adenosyl-L-homocysteine + H(+). In terms of biological role, specifically methylates the adenine in position 37 of tRNA(1)(Val) (anticodon cmo5UAC). This Pasteurella multocida (strain Pm70) protein is tRNA1(Val) (adenine(37)-N6)-methyltransferase.